The chain runs to 163 residues: SsrA-binding protein (163 aa).

The protein belongs to the SmpB family.

The protein resides in the cytoplasm. Functionally, required for rescue of stalled ribosomes mediated by trans-translation. Binds to transfer-messenger RNA (tmRNA), required for stable association of tmRNA with ribosomes. tmRNA and SmpB together mimic tRNA shape, replacing the anticodon stem-loop with SmpB. tmRNA is encoded by the ssrA gene; the 2 termini fold to resemble tRNA(Ala) and it encodes a 'tag peptide', a short internal open reading frame. During trans-translation Ala-aminoacylated tmRNA acts like a tRNA, entering the A-site of stalled ribosomes, displacing the stalled mRNA. The ribosome then switches to translate the ORF on the tmRNA; the nascent peptide is terminated with the 'tag peptide' encoded by the tmRNA and targeted for degradation. The ribosome is freed to recommence translation, which seems to be the essential function of trans-translation. The sequence is that of SsrA-binding protein from Corynebacterium diphtheriae (strain ATCC 700971 / NCTC 13129 / Biotype gravis).